The following is a 289-amino-acid chain: Pyridoxal kinase PdxY (289 aa).

Substrate is bound by residues Ser-9 and 44 to 45 (TQ). ATP contacts are provided by residues Asp-112, Ala-144, Glu-149, Lys-183, and 210–213 (RPLV). Asp-225 lines the substrate pocket.

This sequence belongs to the pyridoxine kinase family. PdxY subfamily. As to quaternary structure, homodimer. Mg(2+) is required as a cofactor.

The enzyme catalyses pyridoxal + ATP = pyridoxal 5'-phosphate + ADP + H(+). Its pathway is cofactor metabolism; pyridoxal 5'-phosphate salvage; pyridoxal 5'-phosphate from pyridoxal: step 1/1. In terms of biological role, pyridoxal kinase involved in the salvage pathway of pyridoxal 5'-phosphate (PLP). Catalyzes the phosphorylation of pyridoxal to PLP. The chain is Pyridoxal kinase PdxY from Proteus mirabilis.